A 269-amino-acid polypeptide reads, in one-letter code: Hydroxyethylthiazole kinase (269 aa).

Met-46 is a binding site for substrate. Residues Arg-121 and Thr-166 each contribute to the ATP site. Gly-193 is a substrate binding site.

This sequence belongs to the Thz kinase family. It depends on Mg(2+) as a cofactor.

It catalyses the reaction 5-(2-hydroxyethyl)-4-methylthiazole + ATP = 4-methyl-5-(2-phosphooxyethyl)-thiazole + ADP + H(+). It participates in cofactor biosynthesis; thiamine diphosphate biosynthesis; 4-methyl-5-(2-phosphoethyl)-thiazole from 5-(2-hydroxyethyl)-4-methylthiazole: step 1/1. Its function is as follows. Catalyzes the phosphorylation of the hydroxyl group of 4-methyl-5-beta-hydroxyethylthiazole (THZ). The chain is Hydroxyethylthiazole kinase from Limosilactobacillus reuteri (strain DSM 20016) (Lactobacillus reuteri).